Here is an 861-residue protein sequence, read N- to C-terminus: Leucine--tRNA ligase (861 aa).

The short motif at 42–52 (PYPSGRLHMGH) is the 'HIGH' region element. A 'KMSKS' region motif is present at residues 619-623 (KMSKS). K622 contacts ATP.

It belongs to the class-I aminoacyl-tRNA synthetase family.

Its subcellular location is the cytoplasm. The enzyme catalyses tRNA(Leu) + L-leucine + ATP = L-leucyl-tRNA(Leu) + AMP + diphosphate. In Haemophilus influenzae (strain PittGG), this protein is Leucine--tRNA ligase.